Reading from the N-terminus, the 362-residue chain is Very-long-chain (3R)-3-hydroxyacyl-CoA dehydratase 3 (362 aa).

Met1 bears the N-acetylmethionine mark. Topologically, residues Met1–Tyr149 are cytoplasmic. In terms of domain architecture, CS spans Val5–Thr94. Phosphothreonine is present on Thr7. Residues Leu111–Gln136 are a coiled coil. Phosphoserine is present on residues Ser114 and Ser135. A helical membrane pass occupies residues Leu150–Val170. Topologically, residues Arg171–Asp189 are lumenal. The helical transmembrane segment at Met190 to Thr210 threads the bilayer. Residues Lys211–Ser212 lie on the Cytoplasmic side of the membrane. Residues Pro213–Gly233 form a helical membrane-spanning segment. At Thr234–Ala242 the chain is on the lumenal side. The helical transmembrane segment at Val243–Met263 threads the bilayer. Topologically, residues Leu264–Thr280 are cytoplasmic. Residues Val281–Ile301 form a helical membrane-spanning segment. Catalysis depends on residues Tyr286 and Glu293. Over Pro302–Ser325 the chain is Lumenal. A helical membrane pass occupies residues Phe326–Leu346. At Tyr347–His362 the chain is on the cytoplasmic side.

Belongs to the very long-chain fatty acids dehydratase HACD family. May interact with enzymes of the ELO family (including ELOVL1); with those enzymes that mediate condensation, the first of the four steps of the reaction cycle responsible for fatty acids elongation, may be part of a larger fatty acids elongase complex. Interacts with RAC1. Associates with internalized insulin receptor/INSR complexes on Golgi/endosomal membranes; HACD3/PTPLAD1 together with ATIC and PRKAA2/AMPK2 is proposed to be part of a signaling network regulating INSR autophosphorylation and endocytosis.

It is found in the endoplasmic reticulum membrane. It carries out the reaction a very-long-chain (3R)-3-hydroxyacyl-CoA = a very-long-chain (2E)-enoyl-CoA + H2O. The enzyme catalyses (3R)-hydroxyhexadecanoyl-CoA = (2E)-hexadecenoyl-CoA + H2O. Its pathway is lipid metabolism; fatty acid biosynthesis. Functionally, catalyzes the third of the four reactions of the long-chain fatty acids elongation cycle. This endoplasmic reticulum-bound enzymatic process, allows the addition of two carbons to the chain of long- and very long-chain fatty acids/VLCFAs per cycle. This enzyme catalyzes the dehydration of the 3-hydroxyacyl-CoA intermediate into trans-2,3-enoyl-CoA, within each cycle of fatty acid elongation. Thereby, it participates in the production of VLCFAs of different chain lengths that are involved in multiple biological processes as precursors of membrane lipids and lipid mediators. Involved in Rac1-signaling pathways leading to the modulation of gene expression. Promotes insulin receptor/INSR autophosphorylation and is involved in INSR internalization. In Bos taurus (Bovine), this protein is Very-long-chain (3R)-3-hydroxyacyl-CoA dehydratase 3.